We begin with the raw amino-acid sequence, 256 residues long: V-type proton ATPase subunit D (256 aa).

The segment covering 211–230 (QNETAKLDAEMKLKRDRAEQ) has biased composition (basic and acidic residues). The disordered stretch occupies residues 211–256 (QNETAKLDAEMKLKRDRAEQDASEVAADEEPQGETLVADQEDDVIF).

It belongs to the V-ATPase D subunit family. V-ATPase is a heteromultimeric enzyme composed of a peripheral catalytic V1 complex (components A to H) attached to an integral membrane V0 proton pore complex (components: a, c, c', c'', d, e, f and VOA1). Interacts with RAV1 and RAV2 components of the RAVE complex, which are essential for the stability and assembly of V-ATPase.

Its subcellular location is the vacuole membrane. Its function is as follows. Subunit of the V1 complex of vacuolar(H+)-ATPase (V-ATPase), a multisubunit enzyme composed of a peripheral complex (V1) that hydrolyzes ATP and a membrane integral complex (V0) that translocates protons. V-ATPase is responsible for acidifying and maintaining the pH of intracellular compartments. In Saccharomyces cerevisiae (strain ATCC 204508 / S288c) (Baker's yeast), this protein is V-type proton ATPase subunit D.